Reading from the N-terminus, the 519-residue chain is 2-isopropylmalate synthase (519 aa).

In terms of domain architecture, Pyruvate carboxyltransferase spans 5–267; the sequence is VVIFDTTLRD…STNINYKEIY (263 aa). Mn(2+) contacts are provided by D14, H202, H204, and N238. Residues 392–519 form a regulatory domain region; it reads SLKFFSVQSI…LKILKDFKKK (128 aa).

Belongs to the alpha-IPM synthase/homocitrate synthase family. LeuA type 1 subfamily. As to quaternary structure, homodimer. The cofactor is Mn(2+).

The protein localises to the cytoplasm. It carries out the reaction 3-methyl-2-oxobutanoate + acetyl-CoA + H2O = (2S)-2-isopropylmalate + CoA + H(+). The protein operates within amino-acid biosynthesis; L-leucine biosynthesis; L-leucine from 3-methyl-2-oxobutanoate: step 1/4. In terms of biological role, catalyzes the condensation of the acetyl group of acetyl-CoA with 3-methyl-2-oxobutanoate (2-ketoisovalerate) to form 3-carboxy-3-hydroxy-4-methylpentanoate (2-isopropylmalate). The sequence is that of 2-isopropylmalate synthase from Buchnera aphidicola subsp. Acyrthosiphon pisum (strain APS) (Acyrthosiphon pisum symbiotic bacterium).